The chain runs to 406 residues: Succinylornithine transaminase (406 aa).

Lys-252 is modified (N6-(pyridoxal phosphate)lysine).

It belongs to the class-III pyridoxal-phosphate-dependent aminotransferase family. AstC subfamily. Requires pyridoxal 5'-phosphate as cofactor.

It carries out the reaction N(2)-succinyl-L-ornithine + 2-oxoglutarate = N-succinyl-L-glutamate 5-semialdehyde + L-glutamate. It functions in the pathway amino-acid degradation; L-arginine degradation via AST pathway; L-glutamate and succinate from L-arginine: step 3/5. Functionally, catalyzes the transamination of N(2)-succinylornithine and alpha-ketoglutarate into N(2)-succinylglutamate semialdehyde and glutamate. Can also act as an acetylornithine aminotransferase. This Escherichia coli O139:H28 (strain E24377A / ETEC) protein is Succinylornithine transaminase.